Reading from the N-terminus, the 605-residue chain is Replication and transcription activator (605 aa).

2 disordered regions span residues 307 to 381 (SLPS…EPEQ) and 447 to 509 (RIRP…EDPD). Residues 321 to 338 (SADCGDSSSSSSDSGNSD) are compositionally biased toward low complexity. The segment covering 341 to 353 (QSEREEARAEAPR) has biased composition (basic and acidic residues). Residues 355-364 (RAPKSRRTSR) show a composition bias toward basic residues.

The protein belongs to the herpesviridae Rta family. As to quaternary structure, interacts with human ATF7IP protein, leading to promote and regulate host genes in virus-infected cells. Interacts with RNA polymerase III complex; this interaction downregulates small RNA transcription and 5'-pppRNA production.

The protein resides in the host nucleus. It is found in the virion tegument. In terms of biological role, immediate-early transcription factor that controls the initiation of viral lytic gene expression and lytic reactivation from latency. Triggers lytic replication, and initiates a cellular senescence program in epithelial cells. Up-regulates human DCR3/TNFRSF6B by directly binding to its receptor. Globally induces a proteasome-dependent loss of SUMOylated proteins in the host cell and the loss of promeylocytic leukemia nuclear bodies. Improves the stability of the triplex capsid protein TRX1 by reducing the ubiquitination level of the latter. Mediates evasion of inflammasome activation and antiviral responses (T- and NK cell activation) during EBV early lytic infection. This Epstein-Barr virus (strain AG876) (HHV-4) protein is Replication and transcription activator.